The chain runs to 359 residues: Dihydroorotate dehydrogenase (quinone) (359 aa).

FMN is bound by residues 65–69 (AGLDK) and Thr-89. Lys-69 is a binding site for substrate. Position 114-118 (114-118 (NRLGF)) interacts with substrate. FMN contacts are provided by Asn-149 and Asn-182. Substrate is bound at residue Asn-182. Ser-185 acts as the Nucleophile in catalysis. Asn-187 lines the substrate pocket. FMN contacts are provided by Lys-233 and Thr-261. 262-263 (NT) contacts substrate. Residues Gly-284, Gly-313, and 334 to 335 (YT) each bind FMN.

The protein belongs to the dihydroorotate dehydrogenase family. Type 2 subfamily. Monomer. FMN serves as cofactor.

The protein localises to the cell membrane. It carries out the reaction (S)-dihydroorotate + a quinone = orotate + a quinol. It functions in the pathway pyrimidine metabolism; UMP biosynthesis via de novo pathway; orotate from (S)-dihydroorotate (quinone route): step 1/1. Catalyzes the conversion of dihydroorotate to orotate with quinone as electron acceptor. The polypeptide is Dihydroorotate dehydrogenase (quinone) (Paracidovorax citrulli (strain AAC00-1) (Acidovorax citrulli)).